The chain runs to 176 residues: Methylmalonyl-CoA epimerase, mitochondrial (176 aa).

A mitochondrion-targeting transit peptide spans methionine 1–aspartate 36. The 130-residue stretch at arginine 47–alanine 176 folds into the VOC domain. Histidine 50 contributes to the Co(2+) binding site. The residue at position 114 (lysine 114) is an N6-succinyllysine. Histidine 122 is a Co(2+) binding site. Residue lysine 150 is modified to N6-acetyllysine; alternate. Lysine 150 is modified (N6-succinyllysine; alternate). Glutamate 172 serves as a coordination point for Co(2+).

Belongs to the methylmalonyl-CoA epimerase family.

It localises to the mitochondrion. The enzyme catalyses (R)-methylmalonyl-CoA = (S)-methylmalonyl-CoA. In terms of biological role, methylmalonyl-CoA epimerase involved in propionyl-CoA metabolism. The polypeptide is Methylmalonyl-CoA epimerase, mitochondrial (Homo sapiens (Human)).